A 129-amino-acid polypeptide reads, in one-letter code: Ribosome-binding factor A (129 aa).

Belongs to the RbfA family. As to quaternary structure, monomer. Binds 30S ribosomal subunits, but not 50S ribosomal subunits or 70S ribosomes.

The protein resides in the cytoplasm. In terms of biological role, one of several proteins that assist in the late maturation steps of the functional core of the 30S ribosomal subunit. Associates with free 30S ribosomal subunits (but not with 30S subunits that are part of 70S ribosomes or polysomes). Required for efficient processing of 16S rRNA. May interact with the 5'-terminal helix region of 16S rRNA. The polypeptide is Ribosome-binding factor A (Azotobacter vinelandii (strain DJ / ATCC BAA-1303)).